The sequence spans 572 residues: Urease subunit alpha (572 aa).

In terms of domain architecture, Urease spans 134–572 (GGIDAHVHFI…LPMAQRYFLF (439 aa)). Ni(2+)-binding residues include His-139, His-141, and Lys-222. N6-carboxylysine is present on Lys-222. A substrate-binding site is contributed by His-224. His-251 and His-277 together coordinate Ni(2+). The active-site Proton donor is His-325. Asp-365 serves as a coordination point for Ni(2+).

The protein belongs to the metallo-dependent hydrolases superfamily. Urease alpha subunit family. As to quaternary structure, heterotrimer of UreA (gamma), UreB (beta) and UreC (alpha) subunits. Three heterotrimers associate to form the active enzyme. Ni cation is required as a cofactor. Carboxylation allows a single lysine to coordinate two nickel ions.

Its subcellular location is the cytoplasm. The catalysed reaction is urea + 2 H2O + H(+) = hydrogencarbonate + 2 NH4(+). Its pathway is nitrogen metabolism; urea degradation; CO(2) and NH(3) from urea (urease route): step 1/1. The sequence is that of Urease subunit alpha from Synechococcus sp. (strain JA-2-3B'a(2-13)) (Cyanobacteria bacterium Yellowstone B-Prime).